The chain runs to 133 residues: Small ribosomal subunit protein uS8 (133 aa).

The protein belongs to the universal ribosomal protein uS8 family. As to quaternary structure, part of the 30S ribosomal subunit. Contacts proteins S5 and S12.

Its function is as follows. One of the primary rRNA binding proteins, it binds directly to 16S rRNA central domain where it helps coordinate assembly of the platform of the 30S subunit. The sequence is that of Small ribosomal subunit protein uS8 from Oenococcus oeni (strain ATCC BAA-331 / PSU-1).